The sequence spans 113 residues: Replication initiation control protein YabA (113 aa).

Positions 86, 88, 102, and 105 each coordinate Zn(2+).

Belongs to the YabA family. Homotetramer. Interacts with both DnaA and DnaN, acting as a bridge between these two proteins. Requires Zn(2+) as cofactor.

Its subcellular location is the cytoplasm. The protein resides in the nucleoid. Functionally, involved in control of chromosome replication initiation. Inhibits the cooperative binding of DnaA to the oriC region, thus negatively regulating initiation of chromosome replication. Inhibits the ability of DnaA-ATP to form a helix on DNA; does not disassemble preformed DnaA-DNA helices. Decreases the residence time of DnaA on the chromosome at its binding sites (oriC, replication forks and promoter-binding sites). Tethers DnaA to the replication machinery via the DNA polymerase beta sliding clamp subunit (dnaN). Associates with oriC and other DnaA targets on the chromosome in a DnaA-dependent manner. The protein is Replication initiation control protein YabA of Pediococcus pentosaceus (strain ATCC 25745 / CCUG 21536 / LMG 10740 / 183-1w).